The following is a 295-amino-acid chain: Putative S-adenosyl-L-methionine-dependent methyltransferase Mvan_0910 (295 aa).

S-adenosyl-L-methionine contacts are provided by residues D126 and 155–156; that span reads DL.

The protein belongs to the UPF0677 family.

Exhibits S-adenosyl-L-methionine-dependent methyltransferase activity. The polypeptide is Putative S-adenosyl-L-methionine-dependent methyltransferase Mvan_0910 (Mycolicibacterium vanbaalenii (strain DSM 7251 / JCM 13017 / BCRC 16820 / KCTC 9966 / NRRL B-24157 / PYR-1) (Mycobacterium vanbaalenii)).